The chain runs to 176 residues: Large ribosomal subunit protein uL6 (176 aa).

This sequence belongs to the universal ribosomal protein uL6 family. As to quaternary structure, part of the 50S ribosomal subunit.

Its function is as follows. This protein binds to the 23S rRNA, and is important in its secondary structure. It is located near the subunit interface in the base of the L7/L12 stalk, and near the tRNA binding site of the peptidyltransferase center. The polypeptide is Large ribosomal subunit protein uL6 (Burkholderia lata (strain ATCC 17760 / DSM 23089 / LMG 22485 / NCIMB 9086 / R18194 / 383)).